Reading from the N-terminus, the 867-residue chain is Bifunctional isopimaradiene synthase, chloroplastic (867 aa).

A chloroplast-targeting transit peptide spans 1–68 (MALLSSSLSS…VGEGTTSLPY (68 aa)). Position 267 (lysine 267) interacts with substrate. Mg(2+)-binding residues include aspartate 400 and aspartate 402. A DXDD motif motif is present at residues 400–403 (DIDD). Lysine 487 provides a ligand contact to substrate. Residues aspartate 619, aspartate 623, asparagine 763, threonine 767, and glutamate 771 each contribute to the Mg(2+) site. Positions 619 to 623 (DDLYD) match the DDXXD motif motif.

Belongs to the terpene synthase family. Tpsd subfamily. Mg(2+) serves as cofactor.

The protein resides in the plastid. It localises to the chloroplast. The catalysed reaction is (2E,6E,10E)-geranylgeranyl diphosphate = (+)-copalyl diphosphate. It catalyses the reaction (+)-copalyl diphosphate = isopimara-7,15-diene + diphosphate. It participates in terpene metabolism; oleoresin biosynthesis. Involved in defensive oleoresin formation in conifers in response to insect attack or other injury. Involved in diterpene (C20) olefins biosynthesis. Bifunctional enzyme that catalyzes two sequential cyclizations of geranylgeranyl diphosphate (GGPP) to isopimara-7,15-diene. This chain is Bifunctional isopimaradiene synthase, chloroplastic (TPS-ISO), found in Picea abies (Norway spruce).